Here is a 139-residue protein sequence, read N- to C-terminus: Holo-[acyl-carrier-protein] synthase (139 aa).

Residues Asp-8 and Glu-57 each coordinate Mg(2+).

Belongs to the P-Pant transferase superfamily. AcpS family. Mg(2+) is required as a cofactor.

Its subcellular location is the cytoplasm. The catalysed reaction is apo-[ACP] + CoA = holo-[ACP] + adenosine 3',5'-bisphosphate + H(+). Its function is as follows. Transfers the 4'-phosphopantetheine moiety from coenzyme A to a Ser of acyl-carrier-protein. The protein is Holo-[acyl-carrier-protein] synthase of Dinoroseobacter shibae (strain DSM 16493 / NCIMB 14021 / DFL 12).